The primary structure comprises 127 residues: Glycine cleavage system H protein (127 aa).

The region spanning 22–104 (KARIGITHFA…YEKAWMIVVE (83 aa)) is the Lipoyl-binding domain. An N6-lipoyllysine modification is found at Lys-63.

It belongs to the GcvH family. The glycine cleavage system is composed of four proteins: P, T, L and H. (R)-lipoate is required as a cofactor.

The glycine cleavage system catalyzes the degradation of glycine. The H protein shuttles the methylamine group of glycine from the P protein to the T protein. Functionally, is also involved in protein lipoylation via its role as an octanoyl/lipoyl carrier protein intermediate. The sequence is that of Glycine cleavage system H protein from Bacillus subtilis (strain 168).